We begin with the raw amino-acid sequence, 1455 residues long: DNA-directed RNA polymerase subunit beta (1455 aa).

Belongs to the RNA polymerase beta chain family. As to quaternary structure, the RNAP catalytic core consists of 2 alpha, 1 beta, 1 beta' and 1 omega subunit. When a sigma factor is associated with the core the holoenzyme is formed, which can initiate transcription.

The enzyme catalyses RNA(n) + a ribonucleoside 5'-triphosphate = RNA(n+1) + diphosphate. DNA-dependent RNA polymerase catalyzes the transcription of DNA into RNA using the four ribonucleoside triphosphates as substrates. This is DNA-directed RNA polymerase subunit beta from Rhizorhabdus wittichii (strain DSM 6014 / CCUG 31198 / JCM 15750 / NBRC 105917 / EY 4224 / RW1) (Sphingomonas wittichii).